Here is a 380-residue protein sequence, read N- to C-terminus: Flap endonuclease 1 (380 aa).

The N-domain stretch occupies residues 1–104 (MGIHGLAKLI…GELEKRGERR (104 aa)). Aspartate 34 contacts Mg(2+). Arginine 47 and arginine 70 together coordinate DNA. Aspartate 86, glutamate 158, glutamate 160, aspartate 179, and aspartate 181 together coordinate Mg(2+). Residues 122–253 (NIDKFSKRLV…KRAMDLIRQH (132 aa)) are I-domain. Glutamate 158 is a binding site for DNA. DNA-binding residues include glycine 231 and aspartate 233. Aspartate 233 contacts Mg(2+). The segment at 336–344 (TQGRLDSFF) is interaction with PCNA. A disordered region spans residues 348–380 (GSLSSKRKEPEMKGSTKKKLKTGATAGKFKKGK).

The protein belongs to the XPG/RAD2 endonuclease family. FEN1 subfamily. In terms of assembly, interacts with PCNA. Three molecules of fen1 bind to one PCNA trimer with each molecule binding to one PCNA monomer. PCNA stimulates the nuclease activity without altering cleavage specificity. Mg(2+) is required as a cofactor. Post-translationally, phosphorylated. Phosphorylation upon DNA damage induces relocalization to the nuclear plasma.

Its subcellular location is the nucleus. The protein localises to the nucleolus. It is found in the nucleoplasm. It localises to the mitochondrion. Functionally, structure-specific nuclease with 5'-flap endonuclease and 5'-3' exonuclease activities involved in DNA replication and repair. During DNA replication, cleaves the 5'-overhanging flap structure that is generated by displacement synthesis when DNA polymerase encounters the 5'-end of a downstream Okazaki fragment. It enters the flap from the 5'-end and then tracks to cleave the flap base, leaving a nick for ligation. Also involved in the long patch base excision repair (LP-BER) pathway, by cleaving within the apurinic/apyrimidinic (AP) site-terminated flap. Acts as a genome stabilization factor that prevents flaps from equilibrating into structures that lead to duplications and deletions. Also possesses 5'-3' exonuclease activity on nicked or gapped double-stranded DNA, and exhibits RNase H activity. Also involved in replication and repair of rDNA and in repairing mitochondrial DNA. This Osmerus mordax (Rainbow smelt) protein is Flap endonuclease 1 (fen1).